The following is a 335-amino-acid chain: DNA-directed RNA polymerase RPB7 homolog (335 aa).

The protein belongs to the Asfivirus DNA-directed RNA polymerase RPB7 homolog family. As to quaternary structure, part of the viral DNA-directed RNA polymerase that consists of 8 polII-like subunits (RPB1, RPB2, RPB3, RPB5, RPB6, RPB7, RPB9, RPB10), a capping enzyme and a termination factor.

The protein resides in the host cytoplasm. Its subcellular location is the virion. Its function is as follows. Component of the DNA-directed RNA polymerase (RNAP) that catalyzes the transcription in the cytoplasm of viral DNA into RNA using the four ribonucleoside triphosphates as substrates. The protein is DNA-directed RNA polymerase RPB7 homolog of Ornithodoros (relapsing fever ticks).